The primary structure comprises 113 residues: Probable 4-amino-4-deoxy-L-arabinose-phosphoundecaprenol flippase subunit ArnE (113 aa).

A run of 3 helical transmembrane segments spans residues isoleucine 39–leucine 59, isoleucine 62–isoleucine 82, and valine 91–methionine 111. The region spanning leucine 42–methionine 111 is the EamA domain.

Belongs to the ArnE family. As to quaternary structure, heterodimer of ArnE and ArnF.

It localises to the cell inner membrane. The protein operates within bacterial outer membrane biogenesis; lipopolysaccharide biosynthesis. Functionally, translocates 4-amino-4-deoxy-L-arabinose-phosphoundecaprenol (alpha-L-Ara4N-phosphoundecaprenol) from the cytoplasmic to the periplasmic side of the inner membrane. The sequence is that of Probable 4-amino-4-deoxy-L-arabinose-phosphoundecaprenol flippase subunit ArnE from Proteus mirabilis (strain HI4320).